Consider the following 178-residue polypeptide: CCHC-type zinc finger nucleic acid binding protein (178 aa).

Position 2 is an N-acetylserine (serine 2). The CCHC-type 1 zinc-finger motif lies at 4-21 (NECFKCGRSGHWARECPT). An N6-acetyllysine modification is found at lysine 8. Residues arginine 25 and arginine 27 each carry the omega-N-methylarginine; by PRMT1 modification. The segment at 25–38 (RGRGMRSRGRGGFT) is RNA-binding Arg/Gly-rich region (RGG-box). Residues arginine 32 and arginine 34 each carry the omega-N-methylarginine modification. Residue serine 49 is modified to Phosphoserine. 6 CCHC-type zinc fingers span residues 52–69 (DICY…DCDL), 72–90 (DEAC…DCKE), 97–114 (QCCY…DCDH), 118–135 (QKCY…DCTK), 136–153 (VKCY…NCSK), and 157–174 (VNCY…ECTI). 3 positions are modified to omega-N-methylarginine: aspartate 72, glycine 79, and arginine 80.

In terms of assembly, associates with the 40S ribosomal subunit, the 80S ribosome and with polysomes. Post-translationally, arginine methylation by PRMT1 in the Arg/Gly-rich region impedes RNA binding.

The protein localises to the nucleus. The protein resides in the cytoplasm. It is found in the endoplasmic reticulum. Its function is as follows. Single-stranded DNA-binding protein that preferentially binds to the sterol regulatory element (SRE) sequence 5'-GTGCGGTG-3', and thereby mediates transcriptional repression. Has a role as transactivator of the Myc promoter. Binds single-stranded RNA in a sequence-specific manner. Binds G-rich elements in target mRNA coding sequences. Prevents G-quadruplex structure formation in vitro, suggesting a role in supporting translation by resolving stable structures on mRNAs. The polypeptide is CCHC-type zinc finger nucleic acid binding protein (Mus musculus (Mouse)).